The chain runs to 724 residues: Catalase-peroxidase (724 aa).

The tryptophyl-tyrosyl-methioninium (Trp-Tyr) (with M-252) cross-link spans tryptophan 98 to tyrosine 226. Catalysis depends on histidine 99, which acts as the Proton acceptor. The tryptophyl-tyrosyl-methioninium (Tyr-Met) (with W-98) cross-link spans tyrosine 226 to methionine 252. Residue histidine 267 coordinates heme b.

It belongs to the peroxidase family. Peroxidase/catalase subfamily. Homodimer or homotetramer. Requires heme b as cofactor. Formation of the three residue Trp-Tyr-Met cross-link is important for the catalase, but not the peroxidase activity of the enzyme.

The catalysed reaction is H2O2 + AH2 = A + 2 H2O. It carries out the reaction 2 H2O2 = O2 + 2 H2O. Bifunctional enzyme with both catalase and broad-spectrum peroxidase activity. The chain is Catalase-peroxidase from Maricaulis maris (strain MCS10) (Caulobacter maris).